A 1590-amino-acid polypeptide reads, in one-letter code: von Willebrand factor D and EGF domain-containing protein (1590 aa).

The first 20 residues, 1–20, serve as a signal peptide directing secretion; it reads MPGGACVLVIALMFLAWGEA. N367 carries N-linked (GlcNAc...) asparagine glycosylation. Residues 423 to 606 form the VWFD domain; that stretch reads AYCYTFTDPH…EWRILPGKSM (184 aa). 2 cysteine pairs are disulfide-bonded: C425–C565 and C468–C477. Residues N703 and N968 are each glycosylated (N-linked (GlcNAc...) asparagine). An EGF-like 1 domain is found at 1177–1216; that stretch reads TVKSCDCLNGGSCVSDRNFSPGSGVYLCVCLPGFHGSLCE. Cystine bridges form between C1181-C1189, C1183-C1204, and C1206-C1215. A compositionally biased stretch (basic and acidic residues) spans 1268–1280; the sequence is DKSVNKEEDDKNA. Residues 1268-1288 form a disordered region; sequence DKSVNKEEDDKNAQGRKRHVK. EGF-like domains follow at residues 1294–1326, 1358–1390, 1422–1454, 1455–1486, 1518–1550, and 1551–1582; these read AFTI…SNCQ, DEEH…PRCE, STAL…EHCQ, NAFC…RRFQ, NTPI…VRCQ, and IPIC…VKCE. Intrachain disulfides connect C1298/C1308, C1302/C1314, C1316/C1325, C1362/C1372, C1366/C1378, C1380/C1389, C1426/C1436, C1430/C1442, C1444/C1453, C1458/C1468, C1462/C1474, C1522/C1532, C1526/C1538, C1540/C1549, C1554/C1564, C1558/C1570, and C1572/C1581.

It localises to the secreted. This chain is von Willebrand factor D and EGF domain-containing protein (VWDE), found in Homo sapiens (Human).